The primary structure comprises 185 residues: Ribosome-recycling factor (185 aa).

This sequence belongs to the RRF family.

Its subcellular location is the cytoplasm. In terms of biological role, responsible for the release of ribosomes from messenger RNA at the termination of protein biosynthesis. May increase the efficiency of translation by recycling ribosomes from one round of translation to another. This is Ribosome-recycling factor from Corynebacterium glutamicum (strain ATCC 13032 / DSM 20300 / JCM 1318 / BCRC 11384 / CCUG 27702 / LMG 3730 / NBRC 12168 / NCIMB 10025 / NRRL B-2784 / 534).